The primary structure comprises 174 residues: Adenine phosphoribosyltransferase (174 aa).

This sequence belongs to the purine/pyrimidine phosphoribosyltransferase family. In terms of assembly, homodimer.

It is found in the cytoplasm. The catalysed reaction is AMP + diphosphate = 5-phospho-alpha-D-ribose 1-diphosphate + adenine. The protein operates within purine metabolism; AMP biosynthesis via salvage pathway; AMP from adenine: step 1/1. Its function is as follows. Catalyzes a salvage reaction resulting in the formation of AMP, that is energically less costly than de novo synthesis. In Nitrosomonas eutropha (strain DSM 101675 / C91 / Nm57), this protein is Adenine phosphoribosyltransferase.